The following is a 151-amino-acid chain: Deoxyuridine 5'-triphosphate nucleotidohydrolase (151 aa).

Substrate is bound by residues 70 to 72 (RSG), N83, and 87 to 89 (VID).

Belongs to the dUTPase family. The cofactor is Mg(2+).

It catalyses the reaction dUTP + H2O = dUMP + diphosphate + H(+). It functions in the pathway pyrimidine metabolism; dUMP biosynthesis; dUMP from dCTP (dUTP route): step 2/2. Its function is as follows. This enzyme is involved in nucleotide metabolism: it produces dUMP, the immediate precursor of thymidine nucleotides and it decreases the intracellular concentration of dUTP so that uracil cannot be incorporated into DNA. The protein is Deoxyuridine 5'-triphosphate nucleotidohydrolase of Desulfitobacterium hafniense (strain DSM 10664 / DCB-2).